A 1370-amino-acid chain; its full sequence is DNA polymerase II large subunit (1370 aa).

2 disordered regions span residues 279–317 (IGAD…PRAA) and 1041–1081 (AGDA…DGGS).

Belongs to the archaeal DNA polymerase II family. Heterodimer of a large subunit and a small subunit. This protein undergoes a protein self splicing that involves a post-translational excision of the intervening region (intein) followed by peptide ligation.

It catalyses the reaction DNA(n) + a 2'-deoxyribonucleoside 5'-triphosphate = DNA(n+1) + diphosphate. The catalysed reaction is Exonucleolytic cleavage in the 3'- to 5'-direction to yield nucleoside 5'-phosphates.. In terms of biological role, possesses two activities: a DNA synthesis (polymerase) and an exonucleolytic activity that degrades single-stranded DNA in the 3'- to 5'-direction. Has a template-primer preference which is characteristic of a replicative DNA polymerase. The polypeptide is DNA polymerase II large subunit (polC) (Halobacterium salinarum (strain ATCC 700922 / JCM 11081 / NRC-1) (Halobacterium halobium)).